The following is a 641-amino-acid chain: Fibrinogen alpha-2 chain (641 aa).

An N-terminal signal peptide occupies residues 1 to 23 (MTLRGVSMVLTWCLLVSKAWSSG). A coiled-coil region spans residues 107-226 (SVSDVSNQVV…IVHESFSVER (120 aa)). The segment at 228–327 (DARSLHPYSG…QKTEELSFKK (100 aa)) is disordered. Residue asparagine 271 is glycosylated (N-linked (GlcNAc...) asparagine). The segment covering 279-289 (VDERSKVEKDV) has biased composition (basic and acidic residues). Low complexity predominate over residues 293 to 317 (STSSVSSSSSSSSSSSSTSSTISST). Residues 395 to 636 (RTNLSEYIDC…RTAVRFRRVQ (242 aa)) enclose the Fibrinogen C-terminal domain. Asparagine 397 is a glycosylation site (N-linked (GlcNAc...) asparagine). Cysteine 404 and cysteine 435 are disulfide-bonded. Asparagine 458 carries an N-linked (GlcNAc...) asparagine glycan. The cysteines at positions 571 and 584 are disulfide-linked.

As to quaternary structure, heterohexamer; disulfide linked. Contains 2 sets of 3 non-identical chains (alpha, beta and gamma). The 2 heterotrimers are in head to head conformation with the N-termini in a small central domain. In terms of processing, conversion of fibrinogen to fibrin is triggered by thrombin, which cleaves fibrinopeptides A and B from alpha and beta chains, and thus exposes the N-terminal polymerization sites responsible for the formation of the soft clot. The soft clot is converted into the hard clot by factor XIIIA which catalyzes the epsilon-(gamma-glutamyl)lysine cross-linking between gamma chains (stronger) and between alpha chains (weaker) of different monomers. Forms F13A-mediated cross-links between a glutamine and the epsilon-amino group of a lysine residue, forming fibronectin-fibrinogen heteropolymers.

It localises to the secreted. Fibrinogen has a double function: yielding monomers that polymerize into fibrin and acting as a cofactor in platelet aggregation. The protein is Fibrinogen alpha-2 chain of Petromyzon marinus (Sea lamprey).